The primary structure comprises 328 residues: WUSCHEL-related homeobox 6 (328 aa).

Residues 1–11 (MEGSSNSPDRQ) are compositionally biased toward polar residues. A disordered region spans residues 1-45 (MEGSSNSPDRQSSGGSPPEERGGGGSGGGGGRSAAGEPVRSRWTP). The segment covering 23–33 (GGGSGGGGGRS) has biased composition (gly residues). The segment at residues 38–102 (PVRSRWTPKP…NRRSRSRRRQ (65 aa)) is a DNA-binding region (homeobox; WUS-type).

It belongs to the WUS homeobox family.

Its subcellular location is the nucleus. Functionally, transcription factor which may be involved in developmental processes. The protein is WUSCHEL-related homeobox 6 (WOX6) of Oryza sativa subsp. indica (Rice).